The following is a 377-amino-acid chain: Trans-enoyl reductase FMN2 (377 aa).

Residues 7–370 (NASGGYCLNS…DGVIRGKKLV (364 aa)) form the Enoyl reductase (ER) domain. The disordered stretch occupies residues 143 to 173 (LSDMTGNGRSNGYTNGHTNGHTNGHSKGEEE). Residues 144 to 155 (SDMTGNGRSNGY) show a composition bias toward polar residues. The segment covering 156-167 (TNGHTNGHTNGH) has biased composition (low complexity). Residues 186 to 189 (ASAS), 209 to 212 (SPAN), Tyr-227, and 274 to 275 (LD) each bind NADP(+).

The protein belongs to the zinc-containing alcohol dehydrogenase family.

The protein operates within secondary metabolite biosynthesis. Functionally, trans-enoyl reductase; part of the gene cluster that mediates the biosynthesis of fusamarins, isocoumarin derivatives that show moderate cytotoxicity with IC(50) values between 1 and 50 uM. The polyketide synthase FMN1 probably synthesizes two different polyketides, a tetra- and a pentaketide, containinga varying number of double bonds depending on the selective actions of the trans-enoyl reductase FMN2. Chain fusion will presumably be mediated by the KS domain before finally offloading is catalyzed by the alpha/beta hydrolase fold enzyme FMN3. The protein is Trans-enoyl reductase FMN2 of Fusarium mangiferae (Mango malformation disease fungus).